A 233-amino-acid chain; its full sequence is Ribosomal RNA small subunit methyltransferase G (233 aa).

S-adenosyl-L-methionine-binding positions include Gly-96, Leu-101, 146–147 (LE), and Arg-160.

Belongs to the methyltransferase superfamily. RNA methyltransferase RsmG family.

The protein localises to the cytoplasm. It carries out the reaction guanosine(527) in 16S rRNA + S-adenosyl-L-methionine = N(7)-methylguanosine(527) in 16S rRNA + S-adenosyl-L-homocysteine. Functionally, specifically methylates the N7 position of guanine in position 527 of 16S rRNA. The sequence is that of Ribosomal RNA small subunit methyltransferase G from Sphingopyxis alaskensis (strain DSM 13593 / LMG 18877 / RB2256) (Sphingomonas alaskensis).